Consider the following 385-residue polypeptide: Acetate kinase (385 aa).

Asn9 is a binding site for Mg(2+). Lys16 is a binding site for ATP. Substrate is bound at residue Arg87. Residue Asp144 is the Proton donor/acceptor of the active site. ATP contacts are provided by residues 202 to 206 (HLGSG) and 277 to 279 (DMR). Glu373 contacts Mg(2+).

The protein belongs to the acetokinase family. As to quaternary structure, homodimer. Requires Mg(2+) as cofactor. Mn(2+) serves as cofactor.

The protein resides in the cytoplasm. The catalysed reaction is acetate + ATP = acetyl phosphate + ADP. The protein operates within metabolic intermediate biosynthesis; acetyl-CoA biosynthesis; acetyl-CoA from acetate: step 1/2. Its function is as follows. Catalyzes the formation of acetyl phosphate from acetate and ATP. Can also catalyze the reverse reaction. This is Acetate kinase from Rickettsia typhi (strain ATCC VR-144 / Wilmington).